The primary structure comprises 158 residues: Botcinic acid biosynthesis cluster B protein 16 (158 aa).

Its pathway is polyketide biosynthesis. Part of the gene cluster B that mediates the biosynthesis of botcinic acid and its botcinin derivatives, acetate-derived polyketides that contribute to virulence when combined with the sesquiterpene botrydial. Botcinic acid and its derivatives have been shown to induce chlorosis and necrosis during host plant infection, but also have antifungal activities. Two polyketide synthases, BOA6 and BOA9, are involved in the biosynthesis of botcinins. BOA6 mediates the formation of the per-methylated tetraketide core by condensation of four units of malonyl-CoA with one unit of acetyl-CoA, which would be methylated in activated methylene groups to yield a bicyclic acid intermediate that could then either be converted to botrylactone derivatives or lose the starter acetate unit through a retro-Claisen type C-C bond cleavage to yield botcinin derivatives. The second polyketide synthase, BOA9, is probably required for the biosynthesis of the tetraketide side chain of botcinins. The methyltransferase (MT) domain within BOA6 is probably responsible for the incorporation of four methyl groups. The trans-enoyl reductase BOA5 might take over the enoyl reductase function of BOA6 that misses an ER domain. The monooxygenases BOA2, BOA3 and BOA4 might be involved in further hydroxylations at C4, C5 and C8, whereas BOA7, close to BOA9, could potentially be involved in the hydroxylation at C4 in the side chain of botcinins. This Botryotinia fuckeliana (strain B05.10) (Noble rot fungus) protein is Botcinic acid biosynthesis cluster B protein 16.